Reading from the N-terminus, the 105-residue chain is U21-theraphotoxin-Cg1a 4 (105 aa).

Positions Met1–Ala21 are cleaved as a signal peptide. A propeptide spanning residues Glu22 to Glu48 is cleaved from the precursor. Intrachain disulfides connect Cys49/Cys63, Cys56/Cys68, and Cys62/Cys76. Val82 carries the post-translational modification Valine amide. A propeptide spanning residues Gly83–Val105 is cleaved from the precursor.

It belongs to the neurotoxin 10 (Hwtx-1) family. 05 (F4a) subfamily. In terms of tissue distribution, expressed by the venom gland.

The protein resides in the secreted. Functionally, probable ion channel inhibitor. This chain is U21-theraphotoxin-Cg1a 4, found in Chilobrachys guangxiensis (Chinese earth tiger tarantula).